The primary structure comprises 715 residues: Protein DENND6 homolog (715 aa).

Residues 13–58 are a coiled coil; sequence MIFKEEEIKKQQILLEKEEKEKQEQQQKKLNKDNIFKLEEEGKKLE. The 178-residue stretch at 96 to 273 folds into the uDENN domain; sequence NSFCIINFDL…VKQHQLGGGS (178 aa). Disordered regions lie at residues 269 to 296 and 392 to 416; these read LGGG…SNTT and SGTR…NNNN. In terms of domain architecture, cDENN spans 299–476; the sequence is SPSIWSEMKL…KDLLTRHVLD (178 aa). The segment covering 399 to 416 has biased composition (low complexity); it reads SNNNNNQDDSEYNNNNNN. One can recognise a dDENN domain in the interval 478-600; the sequence is KEKILSEYKP…KQWLDDKRAQ (123 aa).

This sequence belongs to the DENND6 family.

In Dictyostelium discoideum (Social amoeba), this protein is Protein DENND6 homolog.